A 434-amino-acid polypeptide reads, in one-letter code: RNA-binding protein SRO9 (434 aa).

A compositionally biased stretch (low complexity) spans 1–13 (MSAETAAANTATA). The interval 1-243 (MSAETAAANT…FHHNQQHPQQ (243 aa)) is disordered. Over residues 26–41 (SKQVNLTPAPLPTSSP) the composition is skewed to polar residues. The residue at position 55 (S55) is a Phosphoserine. Residues 93–124 (KRSGSKNGASNGNSNKSKNNKTAASSTSSSNA) are compositionally biased toward low complexity. The segment covering 125–140 (NRKKKHHQHNAKKQQQ) has biased composition (basic residues). S148 is modified (phosphoserine). K156 is covalently cross-linked (Glycyl lysine isopeptide (Lys-Gly) (interchain with G-Cter in ubiquitin)). The segment covering 158-167 (ATSQENGQST) has biased composition (polar residues). Positions 173–195 (PHHRNHHHSHHHNSNGPQRRKFH) are enriched in basic residues. Positions 196 to 208 (NSNNAGMPQNQGF) are enriched in polar residues. A compositionally biased stretch (low complexity) spans 218–227 (RNARNNNNNR). A compositionally biased stretch (basic residues) spans 228–238 (SKYHNHFHHNQ). One can recognise an HTH La-type RNA-binding domain in the interval 255 to 351 (VQPVLMAINN…KEGDNVTGEA (97 aa)). Residues K301, K342, and K352 each participate in a glycyl lysine isopeptide (Lys-Gly) (interchain with G-Cter in ubiquitin) cross-link. The interval 396–434 (SLPPVPQQEEESSTELASQEQETKEDSAPVAAGESESSL) is disordered. The residue at position 422 (S422) is a Phosphoserine.

Interacts with HAP1. Component of the HMC including HAP1, SRO9 and YDJ1.

The protein localises to the cytoplasm. May overlap in function with tropomyosin and may be involved in organization of actin filaments. Acts as a multicopy suppressor of RHO3 mutation. RNA-binding protein which may modulate mRNA translation. Involved in heme regulation of HAP1, as a component of the high-molecular-weight complex (HMC). The chain is RNA-binding protein SRO9 (SRO9) from Saccharomyces cerevisiae (strain ATCC 204508 / S288c) (Baker's yeast).